A 66-amino-acid chain; its full sequence is Surface composition regulator (66 aa).

Belongs to the GlgS family.

In terms of biological role, major determinant of cell surface composition. Negatively regulates motility, adhesion and synthesis of biofilm exopolysaccharides. This chain is Surface composition regulator, found in Shigella flexneri.